A 207-amino-acid polypeptide reads, in one-letter code: Nuclear transcription factor Y subunit beta (207 aa).

The interval M1 to F52 is a domain. Positions Y27 to F52 are disordered. Over residues M39 to F52 the composition is skewed to basic and acidic residues. The segment at R53 to R142 is b domain. The DNA-binding element occupies L59 to A65. Residues V86–I97 are subunit association domain (SAD). Residue K140 forms a Glycyl lysine isopeptide (Lys-Gly) (interchain with G-Cter in ubiquitin) linkage. The segment at E143–S207 is c domain.

It belongs to the NFYB/HAP3 subunit family. As to quaternary structure, heterotrimeric transcription factor composed of three components, NF-YA, NF-YB and NF-YC. NF-YB and NF-YC must interact and dimerize for NF-YA association and DNA binding. Interacts with C1QBP. Post-translationally, monoubiquitination at Lys-140 plays an important role in transcriptional activation by allowing the deposition of histone H3 methylations as well as histone H2B monoubiquitination at 'Lys-121'.

It localises to the nucleus. Component of the sequence-specific heterotrimeric transcription factor (NF-Y) which specifically recognizes a 5'-CCAAT-3' box motif found in the promoters of its target genes. NF-Y can function as both an activator and a repressor, depending on its interacting cofactors. The protein is Nuclear transcription factor Y subunit beta (NFYB) of Bos taurus (Bovine).